We begin with the raw amino-acid sequence, 1063 residues long: TBC1 domain family member 31 (1063 aa).

7 WD repeats span residues 33–74 (HNTS…LCGN), 75–116 (RFNL…TVTK), 117–157 (ELVS…LDTF), 158–200 (QRKR…CDTL), 201–248 (VCKY…AKQL), 249–296 (FRII…IQTC), and 297–334 (KLLF…NIYS). One can recognise a Rab-GAP TBC domain in the interval 424-599 (EFPTKYRMFI…KLFDNVFSNH (176 aa)). Positions 699–951 (ELDYLRERQA…EAKKWEEAEE (253 aa)) form a coiled coil. The mediates direct interaction with PJA2 stretch occupies residues 1050–1053 (QAQN).

As to quaternary structure, interacts with PJA2; the interaction is direct and recruits PJA2 to centrosomes. Interacts with OFD1; regulates its activity in cilium assembly. Interacts with PRKACA.

The protein localises to the cytoplasm. It localises to the cytoskeleton. Its subcellular location is the microtubule organizing center. It is found in the centrosome. The protein resides in the centriolar satellite. The protein localises to the cilium basal body. Functionally, molecular adapter which is involved in cilium biogenesis. Part of a functional complex including OFD1 a centriolar protein involved in cilium assembly. Could regulate the cAMP-dependent phosphorylation of OFD1, and its subsequent ubiquitination by PJA2 which ultimately leads to its proteasomal degradation. The chain is TBC1 domain family member 31 from Bos taurus (Bovine).